The primary structure comprises 394 residues: Junctional adhesion molecule-like (394 aa).

A signal peptide spans Met-1–Gly-19. 2 consecutive Ig-like V-type domains span residues Leu-20 to Val-132 and Pro-137 to His-250. Residues Leu-20–Leu-275 are Extracellular-facing. 2 cysteine pairs are disulfide-bonded: Cys-42-Cys-116 and Cys-155-Cys-234. N-linked (GlcNAc...) asparagine glycosylation is found at Asn-76 and Asn-231. The helical transmembrane segment at Val-276–Val-296 threads the bilayer. Topologically, residues Lys-297–Phe-394 are cytoplasmic. Residues Pro-369–Phe-394 are disordered. Over residues Arg-372 to Ser-383 the composition is skewed to basic and acidic residues.

The protein belongs to the immunoglobulin superfamily. As to quaternary structure, homodimer; active form in leukocyte-endothelial cell adhesion. Interacts (homodimeric form) with CXADR. Interacts (via cytoplasmic domain) with the PI3 kinase; upon CXADR-binding. Interacts with ITGA4 and ITGB1; integrin alpha-4/beta-1 may regulate leukocyte to endothelial cells adhesion by controlling JAML homodimerization. As to expression, expression is restricted to the hematopoietic tissues with the exception of liver. Expressed in fetal liver, spleen and thymus. Preferentially expressed by mature leukocytes (at protein level).

It is found in the cell membrane. The protein resides in the cell junction. Its function is as follows. Transmembrane protein of the plasma membrane of leukocytes that control their migration and activation through interaction with CXADR, a plasma membrane receptor found on adjacent epithelial and endothelial cells. The interaction between both receptors mediates the activation of gamma-delta T-cells, a subpopulation of T-cells residing in epithelia and involved in tissue homeostasis and repair. Upon epithelial CXADR-binding, JAML induces downstream cell signaling events in gamma-delta T-cells through PI3-kinase and MAP kinases. It results in proliferation and production of cytokines and growth factors by T-cells that in turn stimulate epithelial tissues repair. It also controls the transmigration of leukocytes within epithelial and endothelial tissues through adhesive interactions with epithelial and endothelial CXADR. The polypeptide is Junctional adhesion molecule-like (Homo sapiens (Human)).